Here is a 983-residue protein sequence, read N- to C-terminus: GPI ethanolamine phosphate transferase 2, catalytic subunit (983 aa).

Topologically, residues 1 to 431 are lumenal; that stretch reads MRLGSGTFAT…SLSAQVAQYD (431 aa). Asparagine 194 carries an N-linked (GlcNAc...) asparagine glycan. The next 12 helical transmembrane spans lie at 432–452, 471–491, 506–526, 552–572, 699–719, 721–741, 752–772, 789–809, 812–832, 879–899, 919–939, and 955–975; these read IYSM…LLLS, GFSL…VIVC, LAAG…VSVL, LLIL…SFVE, VLAA…CSPV, KAAL…IGSV, ISKG…ILFT, LKTV…ALLF, HNLP…KFIW, VEIP…VLWA, ACFC…VLVT, and LLYE…FTAM.

This sequence belongs to the PIGG/PIGN/PIGO family. PIGG subfamily. Part of the ethanolamine phosphate transferase 2 complex composed by PIGG and PIGF. PIGF is required to stabilize it. Competes with PIGO for the binding of PIGF.

It is found in the endoplasmic reticulum membrane. It functions in the pathway glycolipid biosynthesis; glycosylphosphatidylinositol-anchor biosynthesis. Its function is as follows. Catalytic subunit of the ethanolamine phosphate transferase 2 complex that transfers an ethanolamine phosphate (EtNP) from a phosphatidylethanolamine (PE) to the 6-OH position of the second alpha-1,6-linked mannose of a 6-PEtn-alpha-D-Man-(1-&gt;2)-alpha-D-Man-(1-&gt;6)-2-PEtn-alpha-D-Man-(1-&gt;4)-alpha-D-GlcN-(1-&gt;6)-(1-radyl,2-acyl-sn-glycero-3-phospho)-2-acyl-inositol (also termed H7) intermediate to generate a 6-PEtn-alpha-D-Man-(1-&gt;2)-6-PEtn-alpha-D-Man-(1-&gt;6)-2-PEtn-alpha-D-Man-(1-&gt;4)-alpha-D-GlcN-(1-&gt;6)-(1-radyl,2-acyl-sn-glycero-3-phospho)-2-acyl-inositol (also termed H8) and participates in the eleventh step of the glycosylphosphatidylinositol-anchor biosynthesis. The chain is GPI ethanolamine phosphate transferase 2, catalytic subunit from Homo sapiens (Human).